A 4383-amino-acid chain; its full sequence is Replicase polyprotein 1a (4383 aa).

One can recognise a CoV Nsp1 globular domain in the interval 54 to 196 (PENHVMVDCR…PWVMYLRKRG (143 aa)). One can recognise a BetaCoV Nsp1 C-terminal domain in the interval 216–246 (FKVEDAYDQVHDEPKGKFSKKAYALIRGYRG). The region spanning 250 to 514 (LLYVDQYGCD…VKETNLICKA (265 aa)) is the CoV Nsp2 N-terminal domain. Cysteine 392, cysteine 397, cysteine 413, and cysteine 416 together coordinate Zn(2+). A C4 region spans residues 392 to 416 (CEQDSCDFKGWIPGNMIDGFACTTC). Positions 524–713 (CGNLHQRELL…AQAFQSVAKV (190 aa)) constitute a CoV Nsp2 middle domain. In terms of domain architecture, CoV Nsp2 C-terminal spans 733–851 (RRRICLSGRK…LDQAWRVPCA (119 aa)). The 114-residue stretch at 853 to 966 (RRVTFKEQPT…LYCAFTAPED (114 aa)) folds into the Ubiquitin-like 1 domain. Residues 995–1025 (PCVASEQEESSEVLEDTLDDGPSVETSDSQV) are disordered. A compositionally biased stretch (acidic residues) spans 1000–1013 (EQEESSEVLEDTLD). The Peptidase C16 1 domain occupies 1036–1274 (DLESVIQDYE…IAQLYGSCIT (239 aa)). The active-site For PL1-PRO activity is the cysteine 1074. Positions 1151, 1154, 1177, and 1179 each coordinate Zn(2+). The C4-type 1 zinc finger occupies 1151-1179 (CIKCDLALKLKGLDAMFFYGDVVSHICKC). Residues histidine 1225 and aspartate 1236 each act as for PL1-PRO activity in the active site. The 161-residue stretch at 1275 to 1435 (PNVCFVKGDI…LISKCQITAV (161 aa)) folds into the Macro domain. Residues 1491-1563 (DDARTFVQSN…VAQIKALFLD (73 aa)) form the DPUP domain. The Ubiquitin-like 2 domain occupies 1562–1617 (LDKVDILLTVDGVNFTNRFVPVGESFGKSLGNVFCDGVNVTKHKCDINYKGKVFFQ). One can recognise a Peptidase C16 2 domain in the interval 1631–1892 (SSFNFDQKEL…KIEYKPDLSQ (262 aa)). Residue cysteine 1671 is the For PL2-PRO activity of the active site. Zn(2+) contacts are provided by cysteine 1749, cysteine 1751, cysteine 1783, and cysteine 1785. The C4-type 2 zinc finger occupies 1749 to 1785 (CKCGVKQEQRTGLDAVMHFGTLSREDLEIGYTVDCSC). Catalysis depends on for PL2-PRO activity residues histidine 1828 and aspartate 1842. The Nucleic acid-binding domain maps to 1906–2007 (IKAQFKTFEK…TYFNRPLLVD (102 aa)). The 150-residue stretch at 2020-2169 (DDSGDSSESG…ADNKVIYTTE (150 aa)) folds into the G2M domain. The next 3 membrane-spanning stretches (helical) occupy residues 2138–2158 (TSAC…WIKI), 2199–2219 (ACII…NVIF), and 2221–2241 (DFYL…AQWI). An HD1 region spans residues 2138–2385 (TSACFNFIKW…ASFIKLFSLF (248 aa)). Residues 2235 to 2296 (GKIAQWIKNT…AIDVVQYEAD (62 aa)) form the 3Ecto domain. 2 disulfides stabilise this stretch: cysteine 2251–cysteine 2275 and cysteine 2266–cysteine 2272. 3 consecutive transmembrane segments (helical) span residues 2313 to 2333 (LIVS…LISI), 2343 to 2363 (LFML…ANML), and 2365 to 2385 (AHVF…FSLF). Residues 2383-2473 (SLFKHVAYGC…ELKRPIQPTD (91 aa)) form a Y1 region. Residues 2383 to 2750 (SLFKHVAYGC…LTTPFSLKGG (368 aa)) form the CoV Nsp3 Y domain. Zn(2+) contacts are provided by histidine 2387, cysteine 2392, cysteine 2397, cysteine 2400, cysteine 2433, histidine 2436, cysteine 2440, and cysteine 2443. A ZF1 region spans residues 2387 to 2400 (HVAYGCSKSGCLFC). The tract at residues 2433 to 2443 (CSKHQWNCIDC) is ZF2. Positions 2474-2566 (VAYHTVTDVK…MVDKNLITTA (93 aa)) are Y2. A coV-Y region spans residues 2474–2750 (VAYHTVTDVK…LTTPFSLKGG (277 aa)). Residues 2567-2649 (NTGTSVTETM…DSVMSAVSAG (83 aa)) are Y3. Residues 2650-2750 (LELTDESCNN…LTTPFSLKGG (101 aa)) are Y4. 7 helical membrane passes run 2752-2772 (VFSY…IGLW), 2824-2844 (STFG…VAVI), 3009-3029 (VFDL…FLAL), 3031-3051 (ASSI…YYLI), 3063-3083 (VVFV…VFQV), 3090-3110 (VYAI…SVIM), and 3115-3135 (LVMY…AVVV). The interval 2752–3135 (VFSYFVYVCF…FCLLYIAVVV (384 aa)) is HD2. A Nsp4C domain is found at 3149–3246 (LGTSVRSDGT…TASVSTSFLQ (98 aa)). The Peptidase C30 domain occupies 3247 to 3549 (SGIVKMVNPT…YQQLAGIKLQ (303 aa)). Active-site for 3CL-PRO activity residues include histidine 3287 and cysteine 3391. The interval 3319–3775 (LSLTVMSYQM…IISCYWGLFS (457 aa)) is HD3. The next 7 helical transmembrane spans lie at 3558–3578 (GTVC…TAFV), 3588–3608 (TNMF…MLLV), 3615–3635 (LTMY…LVVY), 3657–3677 (TYTD…FVTL), 3684–3704 (LFSF…WYKG), 3711–3731 (ILLM…LSMA), and 3755–3775 (IVLL…GLFS). Positions 3837 to 3925 (SKLTDVKCAN…DYAKDNTVLQ (89 aa)) constitute a RdRp Nsp7 cofactor domain. One can recognise a RdRp Nsp8 cofactor domain in the interval 3926–4122 (ALQSEFVNMA…YNEVSATVLQ (197 aa)). Residues 4123–4232 (NNELMPAKLK…GTISSTVRLQ (110 aa)) enclose the Nsp9 ssRNA-binding domain. The ExoN/MTase coactivator domain maps to 4233-4370 (AGTATEYASN…CVSTDTTVQS (138 aa)). Residues cysteine 4306, cysteine 4309, histidine 4315, cysteine 4322, cysteine 4348, cysteine 4351, cysteine 4359, and cysteine 4361 each contribute to the Zn(2+) site. Zinc fingers lie at residues 4306–4322 (CIYC…DGLC) and 4348–4361 (CRVC…SCSC).

This sequence belongs to the coronaviruses polyprotein 1ab family. As to quaternary structure, 3CL-PRO exists as monomer and homodimer. Eight copies of nsp7 and eight copies of nsp8 assemble to form a heterohexadecamer. Nsp9 is a dimer. Nsp10 forms a dodecamer. Specific enzymatic cleavages in vivo by its own proteases yield mature proteins. 3CL-PRO and PL-PRO proteinases are autocatalytically processed.

The protein localises to the host membrane. The protein resides in the host cytoplasm. It is found in the host perinuclear region. It catalyses the reaction Thiol-dependent hydrolysis of ester, thioester, amide, peptide and isopeptide bonds formed by the C-terminal Gly of ubiquitin (a 76-residue protein attached to proteins as an intracellular targeting signal).. It carries out the reaction TSAVLQ-|-SGFRK-NH2 and SGVTFQ-|-GKFKK the two peptides corresponding to the two self-cleavage sites of the SARS 3C-like proteinase are the two most reactive peptide substrates. The enzyme exhibits a strong preference for substrates containing Gln at P1 position and Leu at P2 position.. The enzyme catalyses a 5'-end diphospho-ribonucleoside in mRNA + GTP + H(+) = a 5'-end (5'-triphosphoguanosine)-ribonucleoside in mRNA + diphosphate. The papain-like proteinase 1 (PL1-PRO) and papain-like proteinase 2 (PL2-PRO) are responsible for the cleavages located at the N-terminus of the replicase polyprotein. In addition, PLP2 possesses a deubiquitinating/deISGylating activity and processes both 'Lys-48'- and 'Lys-63'-linked polyubiquitin chains from cellular substrates. Antagonizes innate immune induction of type I interferon by blocking the phosphorylation, dimerization and subsequent nuclear translocation of host IRF-3. In terms of biological role, responsible for the majority of cleavages as it cleaves the C-terminus of replicase polyprotein at 11 sites. Recognizes substrates containing the core sequence [ILMVF]-Q-|-[SGACN]. Inhibited by the substrate-analog Cbz-Val-Asn-Ser-Thr-Leu-Gln-CMK. Also contains an ADP-ribose-1''-phosphate (ADRP)-binding function. Its function is as follows. Nsp7-nsp8 hexadecamer may possibly confer processivity to the polymerase, maybe by binding to dsRNA or by producing primers utilized by the latter. Functionally, catalytic subunit of viral RNA capping enzyme which catalyzes the RNA guanylyltransferase reaction for genomic and sub-genomic RNAs. The kinase-like NiRAN domain of NSP12 transfers RNA to the amino terminus of NSP9, forming a covalent RNA-protein intermediate. Subsequently, the NiRAN domain transfers RNA to GDP, forming the core cap structure GpppA-RNA. The NSP14 and NSP16 methyltransferases then add methyl groups to form functional cap structures. Binds to the 40S ribosomal subunit and inhibits host translation. The nsp1-40S ribosome complex further induces an endonucleolytic cleavage near the 5'UTR of host mRNAs, targeting them for degradation. This inhibits the integrated stress response (ISR) in the infected cell by preventing EIF2S1/eIF2-alpha phosphorylation upstream of stress granule formation and depletes host G3BP1. By suppressing host gene expression, nsp1 facilitates efficient viral gene expression in infected cells and evasion from host immune response. This chain is Replicase polyprotein 1a, found in Human coronavirus OC43 (HCoV-OC43).